The primary structure comprises 346 residues: Histidinol-phosphate aminotransferase (346 aa).

N6-(pyridoxal phosphate)lysine is present on Lys209.

This sequence belongs to the class-II pyridoxal-phosphate-dependent aminotransferase family. Histidinol-phosphate aminotransferase subfamily. Homodimer. Pyridoxal 5'-phosphate serves as cofactor.

The catalysed reaction is L-histidinol phosphate + 2-oxoglutarate = 3-(imidazol-4-yl)-2-oxopropyl phosphate + L-glutamate. It participates in amino-acid biosynthesis; L-histidine biosynthesis; L-histidine from 5-phospho-alpha-D-ribose 1-diphosphate: step 7/9. This is Histidinol-phosphate aminotransferase from Aliivibrio fischeri (strain MJ11) (Vibrio fischeri).